A 118-amino-acid chain; its full sequence is Cell division protein FtsB (118 aa).

Over 1–6 (MRNWRW) the chain is Cytoplasmic. The helical transmembrane segment at 7–24 (LLLVLAALLSWLQHRFWF) threads the bilayer. Topologically, residues 25-118 (GPGNSGEVRM…DLAQPRREKR (94 aa)) are periplasmic. Residues 30–66 (GEVRMLQVQIVQQHQENERLRQRNASLAAEVKNLKDG) are a coiled coil. A disordered region spans residues 97–118 (PLPNDTSADHGVDLAQPRREKR). Residues 103-118 (SADHGVDLAQPRREKR) are compositionally biased toward basic and acidic residues.

It belongs to the FtsB family. In terms of assembly, part of a complex composed of FtsB, FtsL and FtsQ.

It localises to the cell inner membrane. Functionally, essential cell division protein. May link together the upstream cell division proteins, which are predominantly cytoplasmic, with the downstream cell division proteins, which are predominantly periplasmic. This is Cell division protein FtsB from Xylella fastidiosa (strain 9a5c).